Here is a 365-residue protein sequence, read N- to C-terminus: Galactoside alpha-(1,2)-fucosyltransferase 1 (365 aa).

The Cytoplasmic segment spans residues 1 to 8 (MWPLSHRH). Residues 9 to 25 (LCLAFLLVCVLSAISFF) traverse the membrane as a helical; Signal-anchor for type II membrane protein segment. Over 26 to 365 (LHIYQDSIRH…LSPLWTLAEP (340 aa)) the chain is Lumenal. Residues asparagine 65, asparagine 301, and asparagine 327 are each glycosylated (N-linked (GlcNAc...) asparagine).

Belongs to the glycosyltransferase 11 family.

It localises to the golgi apparatus. The protein localises to the golgi stack membrane. The catalysed reaction is a beta-D-galactosyl-(1-&gt;4)-N-acetyl-beta-D-glucosaminyl derivative + GDP-beta-L-fucose = an alpha-L-Fuc-(1-&gt;2)-beta-D-Gal-(1-&gt;4)-beta-D-GlcNAc derivative + GDP + H(+). The enzyme catalyses a ganglioside GA1 + GDP-beta-L-fucose = a ganglioside Fuc-GA1 + GDP + H(+). It carries out the reaction a beta-D-Gal-(1-&gt;3)-beta-D-GlcNAc-(1-&gt;3)-beta-D-Gal-(1-&gt;4)-beta-D-Glc-(1&lt;-&gt;1')-Cer(d18:1(4E)) + GDP-beta-L-fucose = alpha-L-fucosyl-(1-&gt;2)- beta-D-galactosyl-(1-&gt;3)-N-acetyl-beta-D-glucosaminyl-(1-&gt;3)-beta-D-galactosyl-(1-&gt;4)-beta-D-glucosyl-(1&lt;-&gt;1')-N-acylsphing-4-enine + GDP + H(+). It catalyses the reaction a neolactoside nLc4Cer(d18:1(4E)) + GDP-beta-L-fucose = a neolactoside IV(2)-alpha-Fuc-nLc4Cer(d18:1(4E)) + GDP + H(+). The catalysed reaction is a ganglioside GM1 + GDP-beta-L-fucose = a ganglioside Fuc-GM1 + GDP + H(+). The enzyme catalyses beta-D-galactosyl-(1-&gt;3)-N-acetyl-D-galactosamine + GDP-beta-L-fucose = alpha-L-fucosyl-(1-&gt;2)-beta-D-galactosyl-(1-&gt;3)-N-acetyl-D-galactosamine + GDP + H(+). It participates in protein modification; protein glycosylation. Catalyzes the transfer of L-fucose, from a guanosine diphosphate-beta-L-fucose, to the terminal galactose residue of glycoconjugates through an alpha(1,2) linkage leading to H antigen synthesis that is an intermediate substrate in the synthesis of ABO blood group antigens. H antigen is essential for maturation of the glomerular layer of the main olfactory bulb, in cell migration and early cell-cell contacts during tumor associated angiogenesis. Preferentially fucosylates soluble lactose and to a lesser extent fucosylates glycolipids gangliosides GA1 and GM1a. The polypeptide is Galactoside alpha-(1,2)-fucosyltransferase 1 (Mico humeralifer (Black and white tassel-ear marmoset)).